We begin with the raw amino-acid sequence, 607 residues long: Fatty acid amide hydrolase (607 aa).

Catalysis depends on charge relay system residues Lys-205 and Ser-281. 302–305 contributes to the substrate binding site; the sequence is GGGS. Catalysis depends on Ser-305, which acts as the Acyl-ester intermediate.

The protein belongs to the amidase family. Forms homodimers. As to expression, expressed in roots, leaves and flowers. Expressed in seedlings, flowers, roots, siliques, seeds and leaves.

It localises to the endoplasmic reticulum membrane. It is found in the cell membrane. It carries out the reaction N-(5Z,8Z,11Z,14Z-eicosatetraenoyl)-ethanolamine + H2O = ethanolamine + (5Z,8Z,11Z,14Z)-eicosatetraenoate. The catalysed reaction is N-(9Z,12Z-octadecadienoyl)-ethanolamine + H2O = ethanolamine + (9Z,12Z)-octadecadienoate. It catalyses the reaction N-hexadecanoylethanolamine + H2O = ethanolamine + hexadecanoate. The enzyme catalyses N-tetradecanoylethanolamine + H2O = tetradecanoate + ethanolamine. It carries out the reaction N-dodecanoylethanolamine + H2O = dodecanoate + ethanolamine. Its activity is regulated as follows. Inhibited by methyl arachidonyl fluorophosphonate (MAFP). Its function is as follows. Catalyzes the hydrolysis of bioactive endogenous fatty acid amides to their corresponding acids. The hydrolysis of endogenous amidated lipids terminates their participation as lipid mediators in various signaling systems. Converts a wide range of N-acylethanolamines (NAEs) to their corresponding free fatty acids and ethanolamine. Can use oleamide as substrate, but not indole-3-acetamide, 1-naphtalene-acetamide, nicotinic acid amide or L-asparagine. Can use 2-arachidonylglycerol as substrate. Participates in the regulation of plant growth. Hydrolyzes N-dodecanoylethanolamine, which is has a growth inhibitory effect on seedling growth. Involved in plant defense signaling. Involved in abscisic acid (ABA) signaling through mechanisms that are independent of the catalytic activity. Involved in the regulation of flowering time. Catalyzes the hydrolysis of N-acyl L-homoserine lactones (AHLs), which are a class of signaling molecules produced by bacteria for quorum sensing. Accumulation of L-homoserine appears to encourage plant growth at low concentrations by stimulating transpiration, but higher concentrations inhibit growth by stimulating ethylene production. The protein is Fatty acid amide hydrolase of Arabidopsis thaliana (Mouse-ear cress).